A 144-amino-acid polypeptide reads, in one-letter code: Large ribosomal subunit protein uL16 (144 aa).

Belongs to the universal ribosomal protein uL16 family. Part of the 50S ribosomal subunit.

Functionally, binds 23S rRNA and is also seen to make contacts with the A and possibly P site tRNAs. The polypeptide is Large ribosomal subunit protein uL16 (Enterococcus faecalis (strain ATCC 700802 / V583)).